Consider the following 318-residue polypeptide: Putative S-adenosyl-L-methionine-dependent methyltransferase BCG_0781c (318 aa).

S-adenosyl-L-methionine-binding positions include Asp-135 and 164–165 (DL).

Belongs to the UPF0677 family.

Exhibits S-adenosyl-L-methionine-dependent methyltransferase activity. The polypeptide is Putative S-adenosyl-L-methionine-dependent methyltransferase BCG_0781c (Mycobacterium bovis (strain BCG / Pasteur 1173P2)).